Here is a 372-residue protein sequence, read N- to C-terminus: MEKELRIIISGGGTGGHIFPAVSIANAIIELRPDAKILFVGAEGRMEMQRVPDAGYKIIGLPIAGFDRKHLWKNVSVLIKLARSQWKARSIIKNFRPQVAVGVGGYASGPTLKTAGMMGVPTLIQEQNSYAGVTNKLLAQKAKAICVAYDGMEKFFPADKIIMTGNPVRQNLTKDMPEKGAALRSFNLQPDKKTILIVGGSLGARTINNTLTAALATIKENNDIQFIWQTGKYYYPQVTEAVRAAGELPNLYVTDFIKDMAAAYAASDLVISRAGAGSISEFCLLHKPVVLVPSPNVAEDHQTKNALALVDKQAAIYVKDSEAEAKLMDVALNTVADDRKLKELSENIAKLALPDSARIIAQEVIKLAEAEN.

UDP-N-acetyl-alpha-D-glucosamine contacts are provided by residues 14 to 16 (TGG), Asn-128, Arg-169, Ser-201, Ile-257, and Gln-302.

The protein belongs to the glycosyltransferase 28 family. MurG subfamily.

The protein localises to the cell inner membrane. The enzyme catalyses di-trans,octa-cis-undecaprenyl diphospho-N-acetyl-alpha-D-muramoyl-L-alanyl-D-glutamyl-meso-2,6-diaminopimeloyl-D-alanyl-D-alanine + UDP-N-acetyl-alpha-D-glucosamine = di-trans,octa-cis-undecaprenyl diphospho-[N-acetyl-alpha-D-glucosaminyl-(1-&gt;4)]-N-acetyl-alpha-D-muramoyl-L-alanyl-D-glutamyl-meso-2,6-diaminopimeloyl-D-alanyl-D-alanine + UDP + H(+). It participates in cell wall biogenesis; peptidoglycan biosynthesis. In terms of biological role, cell wall formation. Catalyzes the transfer of a GlcNAc subunit on undecaprenyl-pyrophosphoryl-MurNAc-pentapeptide (lipid intermediate I) to form undecaprenyl-pyrophosphoryl-MurNAc-(pentapeptide)GlcNAc (lipid intermediate II). This is UDP-N-acetylglucosamine--N-acetylmuramyl-(pentapeptide) pyrophosphoryl-undecaprenol N-acetylglucosamine transferase from Bacteroides thetaiotaomicron (strain ATCC 29148 / DSM 2079 / JCM 5827 / CCUG 10774 / NCTC 10582 / VPI-5482 / E50).